A 479-amino-acid chain; its full sequence is Aspartyl/glutamyl-tRNA(Asn/Gln) amidotransferase subunit B (479 aa).

It belongs to the GatB/GatE family. GatB subfamily. As to quaternary structure, heterotrimer of A, B and C subunits.

It catalyses the reaction L-glutamyl-tRNA(Gln) + L-glutamine + ATP + H2O = L-glutaminyl-tRNA(Gln) + L-glutamate + ADP + phosphate + H(+). It carries out the reaction L-aspartyl-tRNA(Asn) + L-glutamine + ATP + H2O = L-asparaginyl-tRNA(Asn) + L-glutamate + ADP + phosphate + 2 H(+). In terms of biological role, allows the formation of correctly charged Asn-tRNA(Asn) or Gln-tRNA(Gln) through the transamidation of misacylated Asp-tRNA(Asn) or Glu-tRNA(Gln) in organisms which lack either or both of asparaginyl-tRNA or glutaminyl-tRNA synthetases. The reaction takes place in the presence of glutamine and ATP through an activated phospho-Asp-tRNA(Asn) or phospho-Glu-tRNA(Gln). This is Aspartyl/glutamyl-tRNA(Asn/Gln) amidotransferase subunit B from Geotalea daltonii (strain DSM 22248 / JCM 15807 / FRC-32) (Geobacter daltonii).